The chain runs to 187 residues: Peptidyl-tRNA hydrolase (187 aa).

Tyrosine 18 is a binding site for tRNA. Histidine 23 acts as the Proton acceptor in catalysis. Phenylalanine 65, asparagine 67, and asparagine 113 together coordinate tRNA.

The protein belongs to the PTH family. In terms of assembly, monomer.

The protein localises to the cytoplasm. It catalyses the reaction an N-acyl-L-alpha-aminoacyl-tRNA + H2O = an N-acyl-L-amino acid + a tRNA + H(+). Functionally, hydrolyzes ribosome-free peptidyl-tRNAs (with 1 or more amino acids incorporated), which drop off the ribosome during protein synthesis, or as a result of ribosome stalling. Its function is as follows. Catalyzes the release of premature peptidyl moieties from peptidyl-tRNA molecules trapped in stalled 50S ribosomal subunits, and thus maintains levels of free tRNAs and 50S ribosomes. The chain is Peptidyl-tRNA hydrolase from Coxiella burnetii (strain RSA 331 / Henzerling II).